Reading from the N-terminus, the 437-residue chain is Minor fimbrial subunit HifE (437 aa).

The N-terminal stretch at 1–30 (MNKKSYINHYLTLFKVTTLLFTLSSNPVWA) is a signal peptide.

It belongs to the fimbrial protein family.

The protein localises to the fimbrium. Functionally, may be a minor structural protein required for pilus biogenesis. May be the adhesive component in the pili. The polypeptide is Minor fimbrial subunit HifE (hifE) (Haemophilus influenzae).